We begin with the raw amino-acid sequence, 152 residues long: Protein Smg homolog (152 aa).

The protein belongs to the Smg family.

The sequence is that of Protein Smg homolog from Bordetella petrii (strain ATCC BAA-461 / DSM 12804 / CCUG 43448).